The following is a 96-amino-acid chain: Co-chaperonin GroES (96 aa).

The protein belongs to the GroES chaperonin family. Heptamer of 7 subunits arranged in a ring. Interacts with the chaperonin GroEL.

The protein resides in the cytoplasm. Its function is as follows. Together with the chaperonin GroEL, plays an essential role in assisting protein folding. The GroEL-GroES system forms a nano-cage that allows encapsulation of the non-native substrate proteins and provides a physical environment optimized to promote and accelerate protein folding. GroES binds to the apical surface of the GroEL ring, thereby capping the opening of the GroEL channel. The protein is Co-chaperonin GroES of Solidesulfovibrio magneticus (strain ATCC 700980 / DSM 13731 / RS-1) (Desulfovibrio magneticus).